We begin with the raw amino-acid sequence, 325 residues long: Aldose 1-epimerase (325 aa).

A substrate-binding site is contributed by 73-74 (NR). Histidine 177 functions as the Proton donor in the catalytic mechanism. Aspartate 230 contacts substrate. Glutamate 283 (proton acceptor) is an active-site residue.

This sequence belongs to the aldose epimerase family.

It catalyses the reaction alpha-D-glucose = beta-D-glucose. Its pathway is carbohydrate metabolism; hexose metabolism. The protein is Aldose 1-epimerase (galM) of Bacillus subtilis (strain 168).